A 156-amino-acid polypeptide reads, in one-letter code: MPRKGPVAKRDVLPDPMYNSKLVTRLINKMMVDGKKGKSQTILYNAFDIVRERSDKEPMEVFEQALKNIMPVLEVRARRVGGANYQVPVEVRPERRTTLGLRWLVNYARLRGEKTMEERLAYEILDAANNAGASVKKREDTHKMAEANKAFAHYRW.

Belongs to the universal ribosomal protein uS7 family. In terms of assembly, part of the 30S ribosomal subunit. Contacts proteins S9 and S11.

Its function is as follows. One of the primary rRNA binding proteins, it binds directly to 16S rRNA where it nucleates assembly of the head domain of the 30S subunit. Is located at the subunit interface close to the decoding center, probably blocks exit of the E-site tRNA. This chain is Small ribosomal subunit protein uS7, found in Bacillus cereus (strain G9842).